The primary structure comprises 630 residues: Auxin efflux carrier component 2 (630 aa).

Residues 1–6 (MITGRD) are Extracellular-facing. The chain crosses the membrane as a helical span at residues 7 to 27 (IYDVLAAIVPLYVAMFLAYGS). Residues 28 to 38 (VRWWGIFTPDQ) lie on the Cytoplasmic side of the membrane. A helical transmembrane segment spans residues 39–59 (CSGINRFVAVFAVPLLSFHFI). Valine 51 serves as a coordination point for (indol-3-yl)acetate. Topologically, residues 60 to 70 (STNDPYSMNYR) are extracellular. The helical transmembrane segment at 71–91 (FLAADSLQKLVILAALAVWHN) threads the bilayer. The Cytoplasmic portion of the chain corresponds to 92-108 (LLSRYRRNGGAAASLDW). Residues 109 to 129 (TITLFSLSTLPNTLVMGIPLL) traverse the membrane as a helical segment. 2 residues coordinate (indol-3-yl)acetate: asparagine 120 and leucine 122. Residues 130 to 139 (RAMYGDFSGS) lie on the Extracellular side of the membrane. Residues 140-160 (LMVQIVVLQSVIWYTLMLFLF) form a helical membrane-spanning segment. Tyrosine 153 is a (indol-3-yl)acetate binding site. The Cytoplasmic portion of the chain corresponds to 161-490 (EYRGAKALIS…LIRNPNTYSS (330 aa)). Residues 317 to 350 (ASGKAADPPSYPAPNPGMMPAPRKKELGGSNSNS) are disordered. Residues 325-335 (PSYPAPNPGMM) show a composition bias toward pro residues. Residues 491-511 (LIGLVWSLVSFRWNIQMPSII) traverse the membrane as a helical segment. At 512-514 (KGS) the chain is on the extracellular side. The helical transmembrane segment at 515 to 535 (ISILSDAGLGMAMFSLGLFMA) threads the bilayer. At 536 to 549 (LQPKIISCGKTVAT) the chain is on the cytoplasmic side. The helical transmembrane segment at 550–570 (FAMAVRFLTGPAVIAATSIAI) threads the bilayer. The Extracellular segment spans residues 571–574 (GLRG). Residues 575-595 (VLLHVAIVQAALPQGIVPFVF) traverse the membrane as a helical segment. Positions 590 and 591 each coordinate (indol-3-yl)acetate. Topologically, residues 596 to 609 (AKEYNCHPQILSTA) are cytoplasmic. Residues 610–630 (VIFGMLIALPITILYYVLLGI) traverse the membrane as a helical segment.

Belongs to the auxin efflux carrier (TC 2.A.69.1) family. In terms of assembly, homodimer. In terms of tissue distribution, expressed in roots, leaves, shoot apex and panicles. Expressed in roots, stem bases and young panicles.

Its subcellular location is the membrane. Its function is as follows. Acts as a component of the auxin efflux carrier. Involved in the basipetal polar auxin transport which contributes to the spreading growth of the tillers. This chain is Auxin efflux carrier component 2, found in Oryza sativa subsp. japonica (Rice).